The following is a 317-amino-acid chain: MTESGSTASPLCGVGSSVMTETQETYQATTRVKRGLADMLKGGVIMDVVTPEQARIAEDAGASAVMALERVPADIRSQGGVARMSDPDLIEGIVNAVSIPVMAKARIGHFVEAQVLEALGVDFIDESEVLSPADYTHHINKWKFDVPFVCGATNLGEALRRITEGAAMIRSKGEAGTGDVSEAVRHLRTIRGDINRLRSLDEDELFVAAKEFQAPYDLVREVASTGKLPVVTFVAGGVATPADAALVRQMGAEGVFVGSGIFKSGNPAARAAAIVKAATLFDDPSVIADVSRGLGEAMVGINVSDVPAPHRLAERGW.

Residue Asp47 coordinates D-ribose 5-phosphate. The active-site Schiff-base intermediate with D-ribose 5-phosphate is Lys104. Gly176 lines the D-ribose 5-phosphate pocket. Arg188 serves as a coordination point for D-glyceraldehyde 3-phosphate. D-ribose 5-phosphate-binding positions include Gly237 and 258 to 259; that span reads GS.

Belongs to the PdxS/SNZ family. In terms of assembly, in the presence of PdxT, forms a dodecamer of heterodimers.

It catalyses the reaction aldehydo-D-ribose 5-phosphate + D-glyceraldehyde 3-phosphate + L-glutamine = pyridoxal 5'-phosphate + L-glutamate + phosphate + 3 H2O + H(+). It participates in cofactor biosynthesis; pyridoxal 5'-phosphate biosynthesis. Its function is as follows. Catalyzes the formation of pyridoxal 5'-phosphate from ribose 5-phosphate (RBP), glyceraldehyde 3-phosphate (G3P) and ammonia. The ammonia is provided by the PdxT subunit. Can also use ribulose 5-phosphate and dihydroxyacetone phosphate as substrates, resulting from enzyme-catalyzed isomerization of RBP and G3P, respectively. The chain is Pyridoxal 5'-phosphate synthase subunit PdxS from Corynebacterium glutamicum (strain ATCC 13032 / DSM 20300 / JCM 1318 / BCRC 11384 / CCUG 27702 / LMG 3730 / NBRC 12168 / NCIMB 10025 / NRRL B-2784 / 534).